Here is a 62-residue protein sequence, read N- to C-terminus: Large ribosomal subunit protein bL33 (62 aa).

Belongs to the bacterial ribosomal protein bL33 family.

The sequence is that of Large ribosomal subunit protein bL33 from Acaryochloris marina (strain MBIC 11017).